The sequence spans 399 residues: Argininosuccinate synthase (399 aa).

Residue 8–16 coordinates ATP; it reads AYSGGLDTS. L-citrulline contacts are provided by Y87 and S92. An ATP-binding site is contributed by G117. Residues T119, N123, and D124 each coordinate L-aspartate. N123 contacts L-citrulline. Positions 127, 176, 185, 261, and 273 each coordinate L-citrulline.

The protein belongs to the argininosuccinate synthase family. Type 1 subfamily. As to quaternary structure, homotetramer.

Its subcellular location is the cytoplasm. The catalysed reaction is L-citrulline + L-aspartate + ATP = 2-(N(omega)-L-arginino)succinate + AMP + diphosphate + H(+). It participates in amino-acid biosynthesis; L-arginine biosynthesis; L-arginine from L-ornithine and carbamoyl phosphate: step 2/3. The protein is Argininosuccinate synthase of Clostridioides difficile (strain 630) (Peptoclostridium difficile).